Consider the following 440-residue polypeptide: Protein arginine N-methyltransferase 2 (440 aa).

A disordered region spans residues 147–194 (LSSGSEDGDEEMEVQQDDDEEAPQLVSTEDVEPTVEEPKFIPPDAKEK). The span at 152-168 (EDGDEEMEVQQDDDEEA) shows a compositional bias: acidic residues. Basic and acidic residues predominate over residues 182-194 (EEPKFIPPDAKEK). Residues 192–440 (KEKQVTSEEY…RYAVGTSNRL (249 aa)) enclose the RMT2 domain. S-adenosyl-L-methionine-binding positions include Tyr201, Met230, 252 to 257 (FGMGIV), 273 to 275 (EAH), 310 to 311 (WQ), and Asp330.

It belongs to the class I-like SAM-binding methyltransferase superfamily. RMT2 methyltransferase family. Monomer.

The protein localises to the cytoplasm. It localises to the nucleus. Its function is as follows. S-adenosyl-L-methionine-dependent protein-arginine N-methyltransferase that methylates the delta-nitrogen atom of arginine residues to form N5-methylarginine (type IV) in target proteins. Monomethylates ribosomal protein L12. The protein is Protein arginine N-methyltransferase 2 of Gibberella zeae (strain ATCC MYA-4620 / CBS 123657 / FGSC 9075 / NRRL 31084 / PH-1) (Wheat head blight fungus).